Reading from the N-terminus, the 663-residue chain is Glutamate-rich protein 6 (663 aa).

Disordered regions lie at residues 1-74 and 106-136; these read MAHL…ETFS and LTST…HKSF. Over residues 20–69 the composition is skewed to acidic residues; sequence ESEEELEEEEEEEEVEEEEEEVEEEEEEVEEEEEEVVEEELVGEEQELEA. Low complexity predominate over residues 112–132; the sequence is PSQSATSTETPSASPPSSTSS.

This sequence belongs to the ERICH6 family.

It is found in the nucleus. The sequence is that of Glutamate-rich protein 6 (ERICH6) from Homo sapiens (Human).